The primary structure comprises 509 residues: FAD-linked oxidoreductase anuG (509 aa).

Positions Met1–Ala21 are cleaved as a signal peptide. Residues Tyr75–Thr246 enclose the FAD-binding PCMH-type domain.

Belongs to the oxygen-dependent FAD-linked oxidoreductase family. FAD is required as a cofactor.

It catalyses the reaction (2S,9S)-annullatin H + 2 A = (2S,9S)-annullatin D + 2 AH2. It functions in the pathway secondary metabolite biosynthesis. Functionally, cytochrome P450 monooxygenase; part of the gene cluster that mediates the biosynthesis of annullatin D, an alkylated aromatic polyketide with a fused dihydrobenzofuran lactone ring system that exhibits potent agonistic activities toward the cannabinoid receptors. Within the pathway, anuG is responsible for the five-member lactone ring formation in (2S, 9S)-annullatin D via oxidative lactonization between the two hydroxyl groups. The annullatin backbone 2-hydroxymethyl-3-pentylphenol is assembled from one acetyl-CoA starter unit and 5 malonyl-CoA elongation units by cooperation of the highly reducing polyketide synthase anuA, the short-chain dehydrogenase anuB and the oxidoreductase anuC, before being hydroxylated at the C-5 alkyl chain by the cytochrome P450 monooxygenase anuE to form (8S)-annullatin E. The prenyltransferase anuH subsequently installs one isoprenyl group at the benzene ring to form (8S)-annullatin J. Enzymatic or nonenzymatic dihydro-benzofuran ring formation between the prenyl and the phenolic hydroxyl groups in (8S)-annullatin J results in two diastereomers (2S,9S)-annullatin H and compound 12. The intermediate (2S,9S)-annullatin H is then converted to (2S,9S)-annullatin D by the FAD-linked oxidoreductase anuG-catalyzed five-member lactone ring formation. The isomer 12 acts as a substrate for the short-chain dehydrogenase anuF and is oxidized to (2R)-annullatin F, which is subsequently acetylated by an acetyltransferase leading to (2R)-annullatin G formation. The remaining enzymes identified within the cluster, anuD, anuI and anuJ, seem not to be involved in annullatin biosynthesis. The polypeptide is FAD-linked oxidoreductase anuG (Penicillium roqueforti (strain FM164)).